The sequence spans 464 residues: Soluble pyridine nucleotide transhydrogenase (464 aa).

Residue 35-44 (DSRREVGGNC) coordinates FAD.

This sequence belongs to the class-I pyridine nucleotide-disulfide oxidoreductase family. FAD serves as cofactor.

The protein localises to the cytoplasm. The catalysed reaction is NAD(+) + NADPH = NADH + NADP(+). In terms of biological role, conversion of NADPH, generated by peripheral catabolic pathways, to NADH, which can enter the respiratory chain for energy generation. The polypeptide is Soluble pyridine nucleotide transhydrogenase (Pseudomonas syringae pv. tomato (strain ATCC BAA-871 / DC3000)).